The sequence spans 445 residues: Phosphoglucosamine mutase (445 aa).

Catalysis depends on S102, which acts as the Phosphoserine intermediate. Mg(2+)-binding residues include S102, D241, D243, and D245. S102 is modified (phosphoserine).

Belongs to the phosphohexose mutase family. It depends on Mg(2+) as a cofactor. Activated by phosphorylation.

The enzyme catalyses alpha-D-glucosamine 1-phosphate = D-glucosamine 6-phosphate. Functionally, catalyzes the conversion of glucosamine-6-phosphate to glucosamine-1-phosphate. The protein is Phosphoglucosamine mutase of Haemophilus influenzae (strain PittEE).